Here is a 510-residue protein sequence, read N- to C-terminus: GTPase Der (510 aa).

2 consecutive EngA-type G domains span residues 3 to 167 and 230 to 405; these read LKLA…GPEA and IRLA…KDWT. GTP-binding positions include 9–16, 56–60, 119–122, 236–243, 283–287, and 348–351; these read GRPNVGKS, DTAGF, NKAE, GRPNAGKS, DTAGL, and SKWD. The region spanning 406–490 is the KH-like domain; that stretch reads ARAKTGDLNR…PIRLFVRQGK (85 aa).

Belongs to the TRAFAC class TrmE-Era-EngA-EngB-Septin-like GTPase superfamily. EngA (Der) GTPase family. As to quaternary structure, associates with the 50S ribosomal subunit.

In terms of biological role, GTPase that plays an essential role in the late steps of ribosome biogenesis. This is GTPase Der from Hyphomonas neptunium (strain ATCC 15444).